The sequence spans 429 residues: Enolase (429 aa).

A (2R)-2-phosphoglycerate-binding site is contributed by glutamine 168. Glutamate 210 (proton donor) is an active-site residue. Residues aspartate 247, glutamate 288, and aspartate 315 each coordinate Mg(2+). Lysine 340, arginine 369, serine 370, and lysine 391 together coordinate (2R)-2-phosphoglycerate. The active-site Proton acceptor is lysine 340.

This sequence belongs to the enolase family. It depends on Mg(2+) as a cofactor.

The protein resides in the cytoplasm. The protein localises to the secreted. It is found in the cell surface. It carries out the reaction (2R)-2-phosphoglycerate = phosphoenolpyruvate + H2O. The protein operates within carbohydrate degradation; glycolysis; pyruvate from D-glyceraldehyde 3-phosphate: step 4/5. Its function is as follows. Catalyzes the reversible conversion of 2-phosphoglycerate (2-PG) into phosphoenolpyruvate (PEP). It is essential for the degradation of carbohydrates via glycolysis. The sequence is that of Enolase from Nostoc punctiforme (strain ATCC 29133 / PCC 73102).